The following is a 183-amino-acid chain: Gamma-crystallin N-B (183 aa).

4 Beta/gamma crystallin 'Greek key' domains span residues 6-46 (GKIC…RVES), 47-89 (GAWI…RPIR), 95-136 (YRME…RVFG), and 138-180 (GAWV…RRIV).

The protein belongs to the beta/gamma-crystallin family. In terms of assembly, monomer.

In terms of biological role, crystallins are the dominant structural components of the vertebrate eye lens. In Danio rerio (Zebrafish), this protein is Gamma-crystallin N-B (crygnb).